The following is an 805-amino-acid chain: Leucine--tRNA ligase (805 aa).

The 'HIGH' region signature appears at Pro-40–His-51. The 'KMSKS' region motif lies at Lys-576 to Ser-580. Lys-579 is an ATP binding site.

It belongs to the class-I aminoacyl-tRNA synthetase family.

The protein localises to the cytoplasm. It catalyses the reaction tRNA(Leu) + L-leucine + ATP = L-leucyl-tRNA(Leu) + AMP + diphosphate. The sequence is that of Leucine--tRNA ligase from Brevibacillus brevis (strain 47 / JCM 6285 / NBRC 100599).